Reading from the N-terminus, the 222-residue chain is Large ribosomal subunit protein uL3 (222 aa).

The interval 129-150 is disordered; that stretch reads HNFRGLPDSHGTERKHRSPGSI.

The protein belongs to the universal ribosomal protein uL3 family. Part of the 50S ribosomal subunit. Forms a cluster with proteins L14 and L19.

One of the primary rRNA binding proteins, it binds directly near the 3'-end of the 23S rRNA, where it nucleates assembly of the 50S subunit. In Acidothermus cellulolyticus (strain ATCC 43068 / DSM 8971 / 11B), this protein is Large ribosomal subunit protein uL3.